An 86-amino-acid polypeptide reads, in one-letter code: Large ribosomal subunit protein bL27 (86 aa).

Residues 1 to 21 (MAHKKAAGSSRNGRDSESKRL) are disordered.

Belongs to the bacterial ribosomal protein bL27 family.

This Hahella chejuensis (strain KCTC 2396) protein is Large ribosomal subunit protein bL27.